A 119-amino-acid chain; its full sequence is Large ribosomal subunit protein bL19 (119 aa).

This sequence belongs to the bacterial ribosomal protein bL19 family.

Functionally, this protein is located at the 30S-50S ribosomal subunit interface and may play a role in the structure and function of the aminoacyl-tRNA binding site. The polypeptide is Large ribosomal subunit protein bL19 (Borreliella afzelii (strain PKo) (Borrelia afzelii)).